The sequence spans 148 residues: Vascular endothelial growth factor homolog (148 aa).

The N-terminal stretch at 1 to 25 is a signal peptide; the sequence is MKLTATLQVVVALLICMYNLPECVS. 3 disulfide bridges follow: cysteine 46–cysteine 88, cysteine 77–cysteine 130, and cysteine 81–cysteine 132. A glycan (N-linked (GlcNAc...) asparagine; by host) is linked at asparagine 95.

This sequence belongs to the PDGF/VEGF growth factor family. As to quaternary structure, homodimer; disulfide-linked.

The protein localises to the secreted. Functionally, induces endothelial proliferation. The chain is Vascular endothelial growth factor homolog from Orf virus (strain NZ7) (OV NZ-7).